The sequence spans 893 residues: Alanine--tRNA ligase (893 aa).

This sequence belongs to the class-II aminoacyl-tRNA synthetase family.

The protein localises to the cytoplasm. It carries out the reaction tRNA(Ala) + L-alanine + ATP = L-alanyl-tRNA(Ala) + AMP + diphosphate. Functionally, catalyzes the attachment of alanine to tRNA(Ala) in a two-step reaction: alanine is first activated by ATP to form Ala-AMP and then transferred to the acceptor end of tRNA(Ala). Also edits incorrectly charged Ser-tRNA(Ala) and Gly-tRNA(Ala) via its editing domain. In Leuconostoc mesenteroides subsp. mesenteroides (strain ATCC 8293 / DSM 20343 / BCRC 11652 / CCM 1803 / JCM 6124 / NCDO 523 / NBRC 100496 / NCIMB 8023 / NCTC 12954 / NRRL B-1118 / 37Y), this protein is Alanine--tRNA ligase (alaS).